Here is a 370-residue protein sequence, read N- to C-terminus: MSFVVANTEFVSGAAGNLARLGSMISAANSAAAAQTTAVAAAGADEVSAAVAALFGAHGQTYQVLSAQAAAFHSQFVQALSGGAQAYAAAEATNFGPLQPLFDVINAPTLALLNRPLIGNGADGTAANPNGQAGGLLIGNGGNGFSPAAGPGGNGGAAGLLGHGGNGGVGALGANGGAGGTGGWLFGNGGAGGNSGGGGGAGGIGGSAVLFGAGGAGGISPNGMGAGGSGGNGGLFFGNGGAGASSFLGGGGAGGRAFLFGDGGAGGAALSAGSAGRGGDAGFFYGNGGAGGSGAGGASSAHGGAGGQAGLFGNGGEGGDGGALGGNGGNGGNAQLIGNGGDGGDGGGAGAPGLGGRGGLLLGLPGANGT.

Positions 1–72 (MSFVVANTEF…QVLSAQAAAF (72 aa)) are UBA. The PE domain maps to 1–93 (MSFVVANTEF…AQAYAAAEAT (93 aa)).

Belongs to the mycobacterial PE family. PGRS subfamily. Interacts directly with host polyubiquitin in a UBA-dependent manner.

It is found in the secreted. Its subcellular location is the cell wall. The protein localises to the cell surface. Mediates direct binding of host ubiquitin (Ub) to the mycobacterial surface, which triggers host xenophagy. Interaction between Rv1468c and ubiquitin recruits autophagy receptor p62 to deliver mycobacteria into LC3-associated autophagosomes. It could be a viable evolutionary strategy adopted by M.tuberculosis to maintain long-term intracellular survival through self-controlling its intracellular bacterial loads to avoid excessive host inflammatory immune responses. This is Ubiquitin-binding protein Rv1468c from Mycobacterium tuberculosis (strain ATCC 25618 / H37Rv).